The chain runs to 864 residues: Receptor like protein 24 (864 aa).

A signal peptide spans 1–29 (MKTVFKSLLLLHFLLLLLLCFVSPSSFFL). Topologically, residues 30–830 (LKVPVGGLVA…EEKGEVINWK (801 aa)) are extracellular. Asparagine 61, asparagine 73, asparagine 94, and asparagine 112 each carry an N-linked (GlcNAc...) asparagine glycan. LRR repeat units follow at residues 100–125 (FHQL…FCNL), 127–148 (KLKL…DLMG), 156–182 (LGKL…LFEL), 183–205 (HSLR…KFGN), 207–229 (NKLE…TISN), 230–253 (LTRI…VQNL), 254–277 (TKLS…LFTF), 279–303 (SLST…STSS), 305–326 (LEIM…ISKL), 327–350 (INLK…LLSP), 351–376 (LKSL…SYIP), 378–398 (SMES…ILKH), 399–423 (LQNL…LWTL), 425–448 (QLSF…VFVN), and 449–472 (LSVR…PLSI). N-linked (GlcNAc...) asparagine glycans are attached at residues asparagine 176, asparagine 194, asparagine 229, and asparagine 252. An N-linked (GlcNAc...) asparagine glycan is attached at asparagine 298. A glycan (N-linked (GlcNAc...) asparagine) is linked at asparagine 338. N-linked (GlcNAc...) asparagine glycans are attached at residues asparagine 433 and asparagine 448. An LRR 16; degenerate repeat occupies 473–492 (IGFSAIHNSFTGEIPLSICN). Asparagine 492 and asparagine 505 each carry an N-linked (GlcNAc...) asparagine glycan. 10 LRR repeats span residues 493 to 514 (RTSL…PQCL), 515 to 538 (SNFM…FYTD), 539 to 562 (SSLK…LLNC), 564 to 585 (SLRF…WLKA), 586 to 610 (LPNL…HQGP), 613 to 637 (FPEL…FFVN), 688 to 712 (LTSY…IGLL), 713 to 735 (KALI…SFAN), 736 to 760 (LMNL…LGSL), and 762 to 785 (FLVY…QITG). N-linked (GlcNAc...) asparagine glycosylation occurs at asparagine 561. An N-linked (GlcNAc...) asparagine glycan is attached at asparagine 719. The helical transmembrane segment at 831–851 (AVAIGYAPGLLFGLAIAHLIA) threads the bilayer. Residues 852 to 864 (SYKPEWLVKIIGF) are Cytoplasmic-facing.

This sequence belongs to the RLP family.

Its subcellular location is the cell membrane. This chain is Receptor like protein 24, found in Arabidopsis thaliana (Mouse-ear cress).